The following is a 1300-amino-acid chain: DNA-directed RNA polymerase subunit beta (1300 aa).

This sequence belongs to the RNA polymerase beta chain family. The RNAP catalytic core consists of 2 alpha, 1 beta, 1 beta' and 1 omega subunit. When a sigma factor is associated with the core the holoenzyme is formed, which can initiate transcription.

The catalysed reaction is RNA(n) + a ribonucleoside 5'-triphosphate = RNA(n+1) + diphosphate. Its function is as follows. DNA-dependent RNA polymerase catalyzes the transcription of DNA into RNA using the four ribonucleoside triphosphates as substrates. In Chlorobium chlorochromatii (strain CaD3), this protein is DNA-directed RNA polymerase subunit beta.